A 477-amino-acid chain; its full sequence is Glycogen synthase (477 aa).

ADP-alpha-D-glucose is bound at residue Lys-15.

Belongs to the glycosyltransferase 1 family. Bacterial/plant glycogen synthase subfamily.

The catalysed reaction is [(1-&gt;4)-alpha-D-glucosyl](n) + ADP-alpha-D-glucose = [(1-&gt;4)-alpha-D-glucosyl](n+1) + ADP + H(+). It participates in glycan biosynthesis; glycogen biosynthesis. In terms of biological role, synthesizes alpha-1,4-glucan chains using ADP-glucose. This chain is Glycogen synthase, found in Escherichia fergusonii (strain ATCC 35469 / DSM 13698 / CCUG 18766 / IAM 14443 / JCM 21226 / LMG 7866 / NBRC 102419 / NCTC 12128 / CDC 0568-73).